Here is a 269-residue protein sequence, read N- to C-terminus: Sulfur carrier protein FdhD (269 aa).

The active-site Cysteine persulfide intermediate is cysteine 111.

Belongs to the FdhD family.

It localises to the cytoplasm. In terms of biological role, required for formate dehydrogenase (FDH) activity. Acts as a sulfur carrier protein that transfers sulfur from IscS to the molybdenum cofactor prior to its insertion into FDH. This Brucella melitensis biotype 1 (strain ATCC 23456 / CCUG 17765 / NCTC 10094 / 16M) protein is Sulfur carrier protein FdhD.